Here is a 650-residue protein sequence, read N- to C-terminus: MSDLVKVTLPDGSQKEAPRGTPVIDFVKGQIGPGLAKAAYFARLDGEPVDLSRAIERDARLEIVTTRNPEALEVARHDAAHVMASVVQKLYPGTQVTIGPAIEDGFYYDFARETPFTPEDLERIEKATNEAIKADLPFVRSEISMEAALALFEGMGERYKVEIVKDIAAKGAKTLTLYKHGDWVDFCLGPHGPSTGRIGVVKLLNVAGAYWRGDAKNAMLQRIYGTAFFDKKELDAHLAKLEEVKKRDHRRLGPQLGLFTFHEFAPGAPFWLPAGTVLYNVLEDAMRRLVLKNGYQEVKTPLLFNKRLWETSGHWGKYRENMFLVVDSESDPALPLEDRCSFSLKPMNCPSHHLIYRMDKRSYRELPVRYFTTDALHRNEASGSLGGLTRVRQFEQDDAHIYLREEQVTDEVLRIFELMKVVYGAFGLGFEATFSTRPEQRIGDDALWDRAEALLRKSLDATGLKWTLNAGDGAFYGPKIDMLVTDSLGRKWQTCTIQLDYAAPERFDLTFVGEDNKEHRPVVIHRAIYGSFERFVAILVEHYAGAFPAWLAPVQARVVTVSDRFEAWAREAGEALQARGWRVEVDASSDKLGAKIRNAQLAKIPFTLVVGEKEVEAKGVSPRRHGGEDLKTMPLETFAELMAREATAPF.

Positions 3–65 (DLVKVTLPDG…ERDARLEIVT (63 aa)) constitute a TGS domain. Positions 248 to 548 (DHRRLGPQLG…LVEHYAGAFP (301 aa)) are catalytic. 3 residues coordinate Zn(2+): Cys-349, His-400, and His-525.

The protein belongs to the class-II aminoacyl-tRNA synthetase family. Homodimer. Requires Zn(2+) as cofactor.

It localises to the cytoplasm. The enzyme catalyses tRNA(Thr) + L-threonine + ATP = L-threonyl-tRNA(Thr) + AMP + diphosphate + H(+). Catalyzes the attachment of threonine to tRNA(Thr) in a two-step reaction: L-threonine is first activated by ATP to form Thr-AMP and then transferred to the acceptor end of tRNA(Thr). Also edits incorrectly charged L-seryl-tRNA(Thr). This Anaeromyxobacter dehalogenans (strain 2CP-1 / ATCC BAA-258) protein is Threonine--tRNA ligase.